Reading from the N-terminus, the 525-residue chain is Zinc finger protein 678 (525 aa).

14 C2H2-type zinc fingers span residues 97–119 (FQCIECGRNFSWRSILTEHKRIH), 125–147 (YKCEECGKVFNRCSNLTKHKRIH), 153–175 (YKCDECGKVFNWWSQLTNHKKIH), 181–203 (YKCDECDKVFNWWSQLTSHKKIH), 209–231 (YPCEECGKAFTQFSNLTQHKRIH), 237–259 (YKCKECCKAFNKFSNLTQHKRIH), 265–287 (YKCEECGNVFNECSHLTRHRRIH), 293–315 (YKCEECGKAFTQFASLTRHKRIH), 321–343 (YQCEECGKTFNRCSHLSSHKRIH), 349–371 (YKCEECGRTFTQFSNLTQHKRIH), 377–399 (YKCKECGKAFNKFSSLTQHRRIH), 405–427 (YKCEECGKVFKQCSHLTSHKRIH), 433–455 (YKCKECGKAFYQSSILSKHKRIH), and 461–483 (YKCEECGKAFNQFSSLTRHKRIH). Residues 489 to 511 (YKCKECGKGFYQSSIHSKYKRIY) form a C2H2-type 15; degenerate zinc finger.

Belongs to the krueppel C2H2-type zinc-finger protein family.

It localises to the nucleus. Its function is as follows. May be involved in transcriptional regulation. The chain is Zinc finger protein 678 (ZNF678) from Homo sapiens (Human).